Consider the following 265-residue polypeptide: Putative hydro-lyase PST_2764 (265 aa).

The protein belongs to the D-glutamate cyclase family.

The polypeptide is Putative hydro-lyase PST_2764 (Stutzerimonas stutzeri (strain A1501) (Pseudomonas stutzeri)).